Consider the following 155-residue polypeptide: UPF0178 protein Amet_2995 (155 aa).

It belongs to the UPF0178 family.

The chain is UPF0178 protein Amet_2995 from Alkaliphilus metalliredigens (strain QYMF).